Here is a 413-residue protein sequence, read N- to C-terminus: MTAPTGTSATTTRPWTPRIATQLSVLACAAFIYVTAEILPVGALSAIARNLRVSVVLVGTLLSWYALVAAVTTVPLVRWTAHWPRRRALVVSLVCLTVSQLVSALAPNFAVLAAGRVLCAVTHGLLWAVIAPIATRLVPPSHAGRATTSIYIGTSLALVVGSPLTAAMSLMWGWRLAAVCVTGAAAAVALAARLALPEMVLRADQLEHVGRRARHHRNPRLVKVSVLTMIAVTGHFVSYTYIVVIIRDVVGVRGPNLAWLLAAYGVAGLVSVPLVARPLDRWPKGAVIVGMTGLTAAFTLLTALAFGERHTAATALLGTGAIVLWGALATAVSPMLQSAAMRSGGDDPDGASGLYVTAFQIGIMAGALLGGLLYERSLAMMLTASAGLMGVALFGMTVSQHLFENPTLSPGDG.

12 consecutive transmembrane segments (helical) span residues 23–43 (LSVL…PVGA), 55–75 (VVLV…TTVP), 89–109 (LVVS…APNF), 110–130 (AVLA…WAVI), 150–170 (IYIG…AMSL), 176–196 (LAAV…RLAL), 226–246 (VLTM…VVII), 256–276 (NLAW…PLVA), 286–306 (AVIV…ALAF), 312–332 (AATA…ATAV), 353–373 (GLYV…GGLL), and 378–398 (LAMM…GMTV).

The protein belongs to the major facilitator superfamily.

It localises to the cell membrane. Inhibited by the drug efflux pump inhibitors verapamil, resperine, piperine, chlorpromazine and carbonyl cyanide m-chlorophenylhydrazone (CCCP). In terms of biological role, active efflux pump that plays an important role in chloramphenicol resistance. Overexpression causes pyrazinamide resistance. The sequence is that of Chloramphenicol efflux pump Rv0191 from Mycobacterium tuberculosis (strain ATCC 25618 / H37Rv).